Consider the following 450-residue polypeptide: Glutamate--tRNA ligase 2 (450 aa).

The 'HIGH' region motif lies at P10 to N20. The 'KMSKS' region motif lies at G243–R247. An ATP-binding site is contributed by K246.

It belongs to the class-I aminoacyl-tRNA synthetase family. Glutamate--tRNA ligase type 1 subfamily. As to quaternary structure, monomer.

It is found in the cytoplasm. The enzyme catalyses tRNA(Glu) + L-glutamate + ATP = L-glutamyl-tRNA(Glu) + AMP + diphosphate. Functionally, catalyzes the attachment of glutamate to tRNA(Glu) in a two-step reaction: glutamate is first activated by ATP to form Glu-AMP and then transferred to the acceptor end of tRNA(Glu). The protein is Glutamate--tRNA ligase 2 of Beijerinckia indica subsp. indica (strain ATCC 9039 / DSM 1715 / NCIMB 8712).